The sequence spans 532 residues: 2,3-bisphosphoglycerate-independent phosphoglycerate mutase (532 aa).

Mn(2+) is bound by residues aspartate 15 and serine 65. The Phosphoserine intermediate role is filled by serine 65. Substrate-binding positions include histidine 126, 156-157 (RD), arginine 188, arginine 194, 258-261 (RPDR), and lysine 331. Mn(2+) is bound by residues aspartate 398, histidine 402, aspartate 439, histidine 440, and histidine 457.

This sequence belongs to the BPG-independent phosphoglycerate mutase family. Monomer. The cofactor is Mn(2+).

The catalysed reaction is (2R)-2-phosphoglycerate = (2R)-3-phosphoglycerate. The protein operates within carbohydrate degradation; glycolysis; pyruvate from D-glyceraldehyde 3-phosphate: step 3/5. In terms of biological role, catalyzes the interconversion of 2-phosphoglycerate and 3-phosphoglycerate. This chain is 2,3-bisphosphoglycerate-independent phosphoglycerate mutase, found in Cyanothece sp. (strain PCC 7425 / ATCC 29141).